The primary structure comprises 254 residues: Imidazole glycerol phosphate synthase subunit HisF (254 aa).

Catalysis depends on residues Asp14 and Asp133.

Belongs to the HisA/HisF family. As to quaternary structure, heterodimer of HisH and HisF.

It localises to the cytoplasm. The catalysed reaction is 5-[(5-phospho-1-deoxy-D-ribulos-1-ylimino)methylamino]-1-(5-phospho-beta-D-ribosyl)imidazole-4-carboxamide + L-glutamine = D-erythro-1-(imidazol-4-yl)glycerol 3-phosphate + 5-amino-1-(5-phospho-beta-D-ribosyl)imidazole-4-carboxamide + L-glutamate + H(+). The protein operates within amino-acid biosynthesis; L-histidine biosynthesis; L-histidine from 5-phospho-alpha-D-ribose 1-diphosphate: step 5/9. In terms of biological role, IGPS catalyzes the conversion of PRFAR and glutamine to IGP, AICAR and glutamate. The HisF subunit catalyzes the cyclization activity that produces IGP and AICAR from PRFAR using the ammonia provided by the HisH subunit. The chain is Imidazole glycerol phosphate synthase subunit HisF from Nitratiruptor sp. (strain SB155-2).